Here is a 254-residue protein sequence, read N- to C-terminus: Ankyrin repeat domain-containing protein 7 (254 aa).

5 ANK repeats span residues 58-87, 91-120, 124-153, 157-186, and 190-219; these read KYRTPLHLACANGHTDVVLFLIEQQCKINV, ENKSPLIKAVQCQNEDCATILLNFGADPDL, RYNTVLHYAVCGQSLSLVEKLLEYEADLEA, DGYTPLLVAVINNNPKMVKFLLEKGADVNA, and YQRTALILAVSGEPPCLVKLLLQQGVELCY.

In terms of tissue distribution, testis specific.

This is Ankyrin repeat domain-containing protein 7 (ANKRD7) from Homo sapiens (Human).